A 255-amino-acid polypeptide reads, in one-letter code: 3-dehydroquinate dehydratase (255 aa).

Residues 47 to 49 (EWR) and Arg83 each bind 3-dehydroquinate. His144 functions as the Proton donor/acceptor in the catalytic mechanism. Residue Lys171 is the Schiff-base intermediate with substrate of the active site. The 3-dehydroquinate site is built by Arg214, Ser233, and Gln237.

The protein belongs to the type-I 3-dehydroquinase family. Homodimer or homotetramer.

It catalyses the reaction 3-dehydroquinate = 3-dehydroshikimate + H2O. The protein operates within metabolic intermediate biosynthesis; chorismate biosynthesis; chorismate from D-erythrose 4-phosphate and phosphoenolpyruvate: step 3/7. In terms of biological role, involved in the third step of the chorismate pathway, which leads to the biosynthesis of aromatic amino acids. Catalyzes the cis-dehydration of 3-dehydroquinate (DHQ) and introduces the first double bond of the aromatic ring to yield 3-dehydroshikimate. The reaction involves the formation of an imine intermediate between the keto group of 3-dehydroquinate and the epsilon-amino group of Lys-170 at the active site. The polypeptide is 3-dehydroquinate dehydratase (Clostridioides difficile (strain 630) (Peptoclostridium difficile)).